We begin with the raw amino-acid sequence, 568 residues long: Cytosolic purine 5'-nucleotidase (568 aa).

The active-site Nucleophile is Asp-52. Positions 52 and 54 each coordinate IMP. 2 residues coordinate Mg(2+): Asp-52 and Asp-54. Asp-54 (proton donor) is an active-site residue. Positions 144 and 154 each coordinate ATP. IMP contacts are provided by Arg-202, Asp-206, Lys-215, Thr-249, Asn-250, Ser-251, and Lys-292. A Mg(2+)-binding site is contributed by Asp-351. Residues Gln-453 and Arg-456 each contribute to the ATP site. Residues 528–568 (ISEIKPPNLFPQKPQEITHCHDEDDDEEEEEEEEEEEEEEE) are disordered. The required for tetramer assembly stretch occupies residues 548-568 (HDEDDDEEEEEEEEEEEEEEE). The segment covering 550–568 (EDDDEEEEEEEEEEEEEEE) has biased composition (acidic residues).

The protein belongs to the 5'(3')-deoxyribonucleotidase family. In terms of assembly, homotetramer. It depends on Mg(2+) as a cofactor.

It localises to the cytoplasm. The protein localises to the cytosol. The catalysed reaction is a ribonucleoside 5'-phosphate + H2O = a ribonucleoside + phosphate. It catalyses the reaction a 2'-deoxyribonucleoside + a ribonucleoside 5'-phosphate = a ribonucleoside + a 2'-deoxyribonucleoside 5'-phosphate. It carries out the reaction IMP + H2O = inosine + phosphate. The enzyme catalyses GMP + H2O = guanosine + phosphate. The catalysed reaction is dIMP + H2O = 2'-deoxyinosine + phosphate. It catalyses the reaction dGMP + H2O = 2'-deoxyguanosine + phosphate. It carries out the reaction XMP + H2O = xanthosine + phosphate. The enzyme catalyses inosine + GMP = guanosine + IMP. The catalysed reaction is dGMP + inosine = 2'-deoxyguanosine + IMP. It catalyses the reaction dIMP + inosine = 2'-deoxyinosine + IMP. It carries out the reaction inosine + UMP = uridine + IMP. The enzyme catalyses inosine + CMP = cytidine + IMP. The catalysed reaction is inosine + AMP = IMP + adenosine. Allosterically activated by various compounds including ATP, 2,3-BPG/2,3-Bisphosphoglyceric acid and Ap4A/P1,P4-bis(5'-adenosyl) tetraphosphate. Binding of an allosteric activator is a prerequisiste to magnesium and substrate binding. Inhibited by inorganic phosphate. Broad specificity cytosolic 5'-nucleotidase that catalyzes the dephosphorylation of 6-hydroxypurine nucleoside 5'-monophosphates. In addition, possesses a phosphotransferase activity by which it can transfer a phosphate from a donor nucleoside monophosphate to an acceptor nucleoside, preferably inosine, deoxyinosine and guanosine. Has the highest activities for IMP and GMP followed by dIMP, dGMP and XMP. Could also catalyze the transfer of phosphates from pyrimidine monophosphates but with lower efficiency. Through these activities regulates the purine nucleoside/nucleotide pools within the cell. In Xenopus tropicalis (Western clawed frog), this protein is Cytosolic purine 5'-nucleotidase (nt5c2).